A 677-amino-acid chain; its full sequence is Pannexin-2 (677 aa).

The Cytoplasmic segment spans residues 11-47 (MATALLAGEKLRELILPGAQDDKAGALAALLLQLKLE). Residues 48-70 (LPFDRVVTIGTVLVPILLVTLVF) traverse the membrane as a helical segment. Residues 71 to 123 (TKNFAEEPIYCYTPHNFTRDQALYARGYCWTELRDALPGVDASLWPSLFEHKF) are Extracellular-facing. Asparagine 86 carries an N-linked (GlcNAc...) asparagine glycan. Residues 124-146 (LPYALLAFAAIMYVPALGWEFLA) form a helical membrane-spanning segment. Over 147-226 (STRLTSELNF…RGRSNFLAKL (80 aa)) the chain is Cytoplasmic. Residues 227–249 (YLARHVLILLLSAVPISYLCTYY) form a helical membrane-spanning segment. Topologically, residues 250–292 (ATQKQNEFTCALGASPDGAAGAGPAVRVSCKLPSVQLQRIIAG) are extracellular. Residues 293–315 (VDIVLLCVMNLIILVNLIHLFIF) traverse the membrane as a helical segment. At 316-643 (RKSNFIFDKL…AREEEDGGPR (328 aa)) the chain is on the cytoplasmic side. Disordered stretches follow at residues 393–423 (ATPTVRDSGVQTVDPSANPAEPDGAAEPPVV) and 454–510 (NSKA…KKHA). The span at 492–504 (GPGPAPAPAPPPA) shows a compositional bias: pro residues. Serine 593 carries the phosphoserine modification.

It belongs to the pannexin family. In terms of assembly, homoheptameric. In terms of processing, S-palmitoylated in neural stem and progenitor cells. Post-translationally, cleaved by CASP3 and CASP7 during apoptosis. Cleavage has no effect on it function.

The protein localises to the cell membrane. The protein resides in the golgi apparatus membrane. It is found in the endoplasmic reticulum membrane. The catalysed reaction is ATP(in) = ATP(out). The enzyme catalyses chloride(in) = chloride(out). It catalyses the reaction iodide(out) = iodide(in). It carries out the reaction Na(+)(in) = Na(+)(out). The catalysed reaction is D-gluconate(in) = D-gluconate(out). Ion channel with a slight anion preference. Also able to release ATP. Plays a role in regulating neurogenesis and apoptosis in keratinocytes. The chain is Pannexin-2 from Homo sapiens (Human).